The primary structure comprises 712 residues: Protein TAPT1 homolog (712 aa).

Residues 1–21 (MNNVPSTSRENSRNPSESSSS) are compositionally biased toward low complexity. 2 disordered regions span residues 1-22 (MNNV…SSSI) and 44-66 (ITMS…EIET). Transmembrane regions (helical) follow at residues 196–216 (FFYL…GALL), 222–242 (TSAE…SMLI), 305–325 (TCGH…LVIL), 379–399 (HIFA…NWNI), 402–422 (FTEM…VDWL), 470–490 (GFIP…TFTL), and 497–517 (IIFG…GVVM). Over residues 596 to 619 (EIRRSTDRETAVSHLTARSDERTP) the composition is skewed to basic and acidic residues. The segment at 596–712 (EIRRSTDRET…MPEQGVQRIE (117 aa)) is disordered. Residues 656-667 (TENNTNSNSEQA) are compositionally biased toward polar residues. Low complexity predominate over residues 675–692 (TAAPVTSSASTNTNATSS).

Belongs to the TAPT1 family.

The protein localises to the membrane. This chain is Protein TAPT1 homolog, found in Caenorhabditis elegans.